The primary structure comprises 648 residues: Cysteine-rich receptor-like protein kinase 38 (648 aa).

A signal peptide spans 1–25; the sequence is MKNSAAIFLTSSLILLLQTLHGVKA. 2 consecutive Gnk2-homologous domains span residues 26–127 and 140–247; these read GFIC…DQST and PSPV…FYPF. Topologically, residues 26-278 are extracellular; the sequence is GFICVGSSFP…EAISITRLKG (253 aa). N-linked (GlcNAc...) asparagine glycosylation is found at Asn37, Asn63, Asn151, Asn174, and Asn253. A helical membrane pass occupies residues 279–299; sequence GIIAIFVVPIVINLLVFIGLI. Residues 300-648 lie on the Cytoplasmic side of the membrane; sequence RAYTRIRKSY…ELSITELSPR (349 aa). The Protein kinase domain maps to 339 to 611; it reads FSFENKIGQG…VIQWLGSETI (273 aa). ATP-binding positions include 345–353 and Lys367; that span reads IGQGGFGSV. Tyr412 carries the phosphotyrosine modification. Asp464 acts as the Proton acceptor in catalysis. At Ser468 the chain carries Phosphoserine. Thr504 is subject to Phosphothreonine. Residue Tyr512 is modified to Phosphotyrosine.

It belongs to the protein kinase superfamily. Ser/Thr protein kinase family. CRK subfamily.

It localises to the membrane. The catalysed reaction is L-seryl-[protein] + ATP = O-phospho-L-seryl-[protein] + ADP + H(+). The enzyme catalyses L-threonyl-[protein] + ATP = O-phospho-L-threonyl-[protein] + ADP + H(+). The sequence is that of Cysteine-rich receptor-like protein kinase 38 (CRK38) from Arabidopsis thaliana (Mouse-ear cress).